A 163-amino-acid polypeptide reads, in one-letter code: Neurotrophin-3 (163 aa).

The first 3 residues, 1–3 (IQS), serve as a signal peptide directing secretion. The propeptide occupies 4-119 (TSMDQGILTE…VLNRTSRRKR (116 aa)). An N-linked (GlcNAc...) asparagine glycan is attached at asparagine 112. A disordered region spans residues 113–133 (RTSRRKREGKSHRGEYSVCDS). Residues 123 to 133 (SHRGEYSVCDS) show a composition bias toward basic and acidic residues.

This sequence belongs to the NGF-beta family.

The protein resides in the secreted. In terms of biological role, seems to promote the survival of visceral and proprioceptive sensory neurons. The chain is Neurotrophin-3 (NTF3) from Charina bottae (Northern rubber boa).